Reading from the N-terminus, the 134-residue chain is MSWQAYVDDHLMCDIEGHEDHRLTAAAIVGHDGSVWAQSATFPQFKPEEMNGIMTDFNEPGHLAPTGLHLGGTKYMVIQGEAGAVIRGKKGSGGITIKKTGQALVFGIYEEPVTPGQCNMVVERLGDYLLEQGM.

A disulfide bridge connects residues Cys-13 and Cys-118. An Involved in PIP2 interaction motif is present at residues 84–100 (AVIRGKKGSGGITIKKT). Thr-114 bears the Phosphothreonine mark.

It belongs to the profilin family. Occurs in many kinds of cells as a complex with monomeric actin in a 1:1 ratio. Post-translationally, phosphorylated by MAP kinases.

Its subcellular location is the cytoplasm. The protein localises to the cytoskeleton. In terms of biological role, binds to actin and affects the structure of the cytoskeleton. At high concentrations, profilin prevents the polymerization of actin, whereas it enhances it at low concentrations. In Olea europaea (Common olive), this protein is Profilin-1.